We begin with the raw amino-acid sequence, 158 residues long: Transcription elongation factor GreA (158 aa).

It belongs to the GreA/GreB family.

In terms of biological role, necessary for efficient RNA polymerase transcription elongation past template-encoded arresting sites. The arresting sites in DNA have the property of trapping a certain fraction of elongating RNA polymerases that pass through, resulting in locked ternary complexes. Cleavage of the nascent transcript by cleavage factors such as GreA or GreB allows the resumption of elongation from the new 3'terminus. GreA releases sequences of 2 to 3 nucleotides. The chain is Transcription elongation factor GreA from Zymomonas mobilis subsp. mobilis (strain ATCC 31821 / ZM4 / CP4).